The sequence spans 162 residues: 2-C-methyl-D-erythritol 2,4-cyclodiphosphate synthase (162 aa).

A divalent metal cation is bound by residues aspartate 12 and histidine 14. Residues 12-14 and 38-39 each bind 4-CDP-2-C-methyl-D-erythritol 2-phosphate; these read DVH and HS. Residue histidine 46 coordinates a divalent metal cation. 4-CDP-2-C-methyl-D-erythritol 2-phosphate is bound by residues 60-62, 136-139, phenylalanine 143, and arginine 146; these read DIG and TTTE.

This sequence belongs to the IspF family. Homotrimer. A divalent metal cation serves as cofactor.

It carries out the reaction 4-CDP-2-C-methyl-D-erythritol 2-phosphate = 2-C-methyl-D-erythritol 2,4-cyclic diphosphate + CMP. The protein operates within isoprenoid biosynthesis; isopentenyl diphosphate biosynthesis via DXP pathway; isopentenyl diphosphate from 1-deoxy-D-xylulose 5-phosphate: step 4/6. In terms of biological role, involved in the biosynthesis of isopentenyl diphosphate (IPP) and dimethylallyl diphosphate (DMAPP), two major building blocks of isoprenoid compounds. Catalyzes the conversion of 4-diphosphocytidyl-2-C-methyl-D-erythritol 2-phosphate (CDP-ME2P) to 2-C-methyl-D-erythritol 2,4-cyclodiphosphate (ME-CPP) with a corresponding release of cytidine 5-monophosphate (CMP). The chain is 2-C-methyl-D-erythritol 2,4-cyclodiphosphate synthase from Porphyromonas gingivalis (strain ATCC 33277 / DSM 20709 / CIP 103683 / JCM 12257 / NCTC 11834 / 2561).